Consider the following 89-residue polypeptide: Small ribosomal subunit protein uS15 (89 aa).

Belongs to the universal ribosomal protein uS15 family. As to quaternary structure, part of the 30S ribosomal subunit. Forms a bridge to the 50S subunit in the 70S ribosome, contacting the 23S rRNA.

Its function is as follows. One of the primary rRNA binding proteins, it binds directly to 16S rRNA where it helps nucleate assembly of the platform of the 30S subunit by binding and bridging several RNA helices of the 16S rRNA. Functionally, forms an intersubunit bridge (bridge B4) with the 23S rRNA of the 50S subunit in the ribosome. This is Small ribosomal subunit protein uS15 from Photobacterium profundum (strain SS9).